A 368-amino-acid polypeptide reads, in one-letter code: D-amino-acid oxidase (368 aa).

Positions 11, 14, 35, 36, 46, 47, 51, 53, and 174 each coordinate FAD. Residues Cys230 and Cys285 are joined by a disulfide bond. Residues Tyr244, Tyr260, and Arg308 each coordinate (R)-lactate. Positions 244, 260, and 308 each coordinate anthranilate. FAD contacts are provided by Arg308, Gly334, Gly337, Tyr338, and Gln339. A Microbody targeting signal motif is present at residues 366–368; the sequence is ARL.

The protein belongs to the DAMOX/DASOX family. In terms of assembly, homotetramer. It depends on FAD as a cofactor. Post-translationally, the disulfide bond might contribute to the high thermal stability of the protein.

The protein localises to the peroxisome matrix. It catalyses the reaction a D-alpha-amino acid + O2 + H2O = a 2-oxocarboxylate + H2O2 + NH4(+). The catalysed reaction is D-alanine + O2 + H2O = pyruvate + H2O2 + NH4(+). The enzyme catalyses D-glutamate + O2 + H2O = H2O2 + 2-oxoglutarate + NH4(+). It carries out the reaction D-serine + O2 + H2O = 3-hydroxypyruvate + H2O2 + NH4(+). It catalyses the reaction D-phenylalanine + O2 + H2O = 3-phenylpyruvate + H2O2 + NH4(+). The catalysed reaction is D-arginine + O2 + H2O = 5-guanidino-2-oxopentanoate + H2O2 + NH4(+). The enzyme catalyses D-methionine + O2 + H2O = 4-methylsulfanyl-2-oxobutanoate + H2O2 + NH4(+). It carries out the reaction D-leucine + O2 + H2O = 4-methyl-2-oxopentanoate + H2O2 + NH4(+). It catalyses the reaction D-lysine + O2 + H2O = 6-amino-2-oxohexanoate + H2O2 + NH4(+). The catalysed reaction is D-valine + O2 + H2O = 3-methyl-2-oxobutanoate + H2O2 + NH4(+). The enzyme catalyses D-histidine + O2 + H2O = 3-(imidazol-5-yl)pyruvate + H2O2 + NH4(+). It carries out the reaction D-glutamine + O2 + H2O = 2-oxoglutaramate + H2O2 + NH4(+). It catalyses the reaction D-isoleucine + O2 + H2O = (R)-3-methyl-2-oxopentanoate + H2O2 + NH4(+). The catalysed reaction is D-allo-isoleucine + O2 + H2O = (S)-3-methyl-2-oxopentanoate + H2O2 + NH4(+). The enzyme catalyses D-threonine + O2 + H2O = (S)-3-hydroxy-2-oxobutanoate + H2O2 + NH4(+). It carries out the reaction D-asparagine + O2 + H2O = 2-oxosuccinamate + H2O2 + NH4(+). It catalyses the reaction D-tryptophan + O2 + H2O = indole-3-pyruvate + H2O2 + NH4(+). The catalysed reaction is D-tyrosine + O2 + H2O = 3-(4-hydroxyphenyl)pyruvate + H2O2 + NH4(+). With respect to regulation, partially inhibited by benzoate, crotonate, and D-malate. Functionally, catalyzes the oxidative deamination of D-amino acids with broad substrate specificity. Enables the organism to utilize D-amino acids as a source of nutrients. Unusually, has high activity on D-glutamate. The polypeptide is D-amino-acid oxidase (Talaromyces emersonii (Thermophilic fungus)).